We begin with the raw amino-acid sequence, 122 residues long: Large ribosomal subunit protein uL18 (122 aa).

Belongs to the universal ribosomal protein uL18 family. In terms of assembly, part of the 50S ribosomal subunit; part of the 5S rRNA/L5/L18/L25 subcomplex. Contacts the 5S and 23S rRNAs.

Its function is as follows. This is one of the proteins that bind and probably mediate the attachment of the 5S RNA into the large ribosomal subunit, where it forms part of the central protuberance. This is Large ribosomal subunit protein uL18 from Mycobacterium leprae (strain TN).